The primary structure comprises 415 residues: 4-hydroxy-3-methylbut-2-en-1-yl diphosphate synthase (flavodoxin) (415 aa).

[4Fe-4S] cluster contacts are provided by Cys298, Cys301, Cys344, and Glu351.

Belongs to the IspG family. [4Fe-4S] cluster serves as cofactor.

It carries out the reaction (2E)-4-hydroxy-3-methylbut-2-enyl diphosphate + oxidized [flavodoxin] + H2O + 2 H(+) = 2-C-methyl-D-erythritol 2,4-cyclic diphosphate + reduced [flavodoxin]. Its pathway is isoprenoid biosynthesis; isopentenyl diphosphate biosynthesis via DXP pathway; isopentenyl diphosphate from 1-deoxy-D-xylulose 5-phosphate: step 5/6. Its function is as follows. Converts 2C-methyl-D-erythritol 2,4-cyclodiphosphate (ME-2,4cPP) into 1-hydroxy-2-methyl-2-(E)-butenyl 4-diphosphate. The chain is 4-hydroxy-3-methylbut-2-en-1-yl diphosphate synthase (flavodoxin) from Solibacter usitatus (strain Ellin6076).